The chain runs to 403 residues: Argininosuccinate synthase (403 aa).

Position 9-17 (9-17 (AYSGGLDTS)) interacts with ATP. Tyr-86 contacts L-citrulline. Gly-116 lines the ATP pocket. The L-aspartate site is built by Thr-118, Asn-122, and Asp-123. Asn-122 lines the L-citrulline pocket. 5 residues coordinate L-citrulline: Arg-126, Ser-174, Ser-183, Glu-259, and Tyr-271.

This sequence belongs to the argininosuccinate synthase family. Type 1 subfamily. Homotetramer.

It localises to the cytoplasm. The enzyme catalyses L-citrulline + L-aspartate + ATP = 2-(N(omega)-L-arginino)succinate + AMP + diphosphate + H(+). It participates in amino-acid biosynthesis; L-arginine biosynthesis; L-arginine from L-ornithine and carbamoyl phosphate: step 2/3. This is Argininosuccinate synthase from Shouchella clausii (strain KSM-K16) (Alkalihalobacillus clausii).